Reading from the N-terminus, the 69-residue chain is MIYKVFYQEKADEVPVREKTDSLYIEGVSERDVRTKLKEKKFNIEFITPVDGAFLEYEQQSENFKVLEL.

Belongs to the RNA polymerase subunit epsilon family. In terms of assembly, monomer. RNAP is composed of a core of 2 alpha, a beta and a beta' subunit. The core is associated with a delta subunit, and at least one of epsilon or omega. When a sigma factor is associated with the core the holoenzyme is formed, which can initiate transcription.

The protein resides in the cytoplasm. The protein localises to the nucleoid. The catalysed reaction is RNA(n) + a ribonucleoside 5'-triphosphate = RNA(n+1) + diphosphate. Functionally, a non-essential component of RNA polymerase (RNAP). Has a similar structure to bacteriophage T7 protein Gp2 (AC P03704), which is known to bind to RNAP in the DNA binding-cleft. Unlike Gp2 however, this protein does not inhibit transcription initiation. In vitro reconstitution experiments show this subunit is dispensible. This Bacillus subtilis (strain 168) protein is DNA-directed RNA polymerase subunit epsilon.